A 519-amino-acid polypeptide reads, in one-letter code: Transketolase, chloroplastic (519 aa).

Residue Asp11 coordinates Mg(2+). The thiamine diphosphate site is built by Gly12 and Asn41. Mg(2+) contacts are provided by Asn41 and Ile43. His118 contacts thiamine diphosphate. Residues His118, Arg212, and Ser239 each coordinate substrate. The thiamine diphosphate site is built by Glu266 and Phe293. Catalysis depends on Glu266, which acts as the Proton donor. Substrate is bound by residues His317, Asp325, and Arg376.

The protein belongs to the transketolase family. In terms of assembly, homodimer. Mg(2+) serves as cofactor. Ca(2+) is required as a cofactor. The cofactor is Mn(2+). Requires Co(2+) as cofactor. It depends on thiamine diphosphate as a cofactor. In terms of tissue distribution, constitutively expressed in leaves and roots.

Its subcellular location is the plastid. It is found in the chloroplast. It catalyses the reaction D-sedoheptulose 7-phosphate + D-glyceraldehyde 3-phosphate = aldehydo-D-ribose 5-phosphate + D-xylulose 5-phosphate. Catalyzes the transfer of a two-carbon ketol group from a ketose donor to an aldose acceptor, via a covalent intermediate with the cofactor thiamine pyrophosphate. The polypeptide is Transketolase, chloroplastic (TKT3) (Craterostigma plantagineum (Blue gem)).